A 209-amino-acid chain; its full sequence is MGPNPMKMYPIEGNKSVQFIKPILEKLENVEVGEYSYYDSKNGETFDKQILYHYPILNDKLKIGKFCSIGPGVTIIMNGANHRMDGSTYPFNLFGNGWEKHMPKLDQLPIKGDTIIGNDVWIGKDVVIMPGVKIGDGAIVAANSVVVKDIAPYMLAGGNPANEIKQRFDQDTINQLLDIKWWNWPIDIINENIDKILDNSIIREVIWKK.

Residue His82 is part of the active site.

This sequence belongs to the transferase hexapeptide repeat family. Homohexamer.

In terms of biological role, inactivates the A compounds of streptogramin antibiotics by acetylation, thus providing resistance to these antibiotics. The sequence is that of Streptogramin A acetyltransferase (vatD) from Enterococcus faecium (Streptococcus faecium).